Here is a 638-residue protein sequence, read N- to C-terminus: Leucine-rich repeat-containing protein 63 (638 aa).

Disordered regions lie at residues 220-241 (VPSTSSVIPEPQWSERTHPSAA) and 306-325 (TTAAVSGKTEAHKPPETVQR). 6 LRR repeats span residues 389–412 (AFQLVYLNLSFNDLNQFPIEILYL), 413–435 (QNLQVLKLRNNPIKEIPSEIHLL), 437–458 (YLRIFSIAFNYITKLPDGLFCL), 460–481 (YLEELDVSYNEIENISNEIQKL), 482–504 (RSLEKLIVDGNPITSFPPGILKL), and 532–556 (LTQICSLFLVKNKLLDYIPDAVRKS).

In Mus musculus (Mouse), this protein is Leucine-rich repeat-containing protein 63.